The primary structure comprises 284 residues: Type II methyltransferase M1.DpnII (284 aa).

S-adenosyl-L-methionine-binding residues include Trp17, Lys21, Gly46, Asp62, Asp177, Phe178, and Asp194.

This sequence belongs to the N(4)/N(6)-methyltransferase family. As to quaternary structure, monomer. Homodimer.

The enzyme catalyses a 2'-deoxyadenosine in DNA + S-adenosyl-L-methionine = an N(6)-methyl-2'-deoxyadenosine in DNA + S-adenosyl-L-homocysteine + H(+). Functionally, an alpha subtype methylase that recognizes the double-stranded sequence 5'-GATC-3', methylates A-2 on both strands, and protects the DNA from cleavage by the DpnII endonuclease. The chain is Type II methyltransferase M1.DpnII from Streptococcus pneumoniae.